Reading from the N-terminus, the 430-residue chain is Asparagine--tRNA ligase (430 aa).

It belongs to the class-II aminoacyl-tRNA synthetase family. As to quaternary structure, homodimer.

Its subcellular location is the cytoplasm. The catalysed reaction is tRNA(Asn) + L-asparagine + ATP = L-asparaginyl-tRNA(Asn) + AMP + diphosphate + H(+). The polypeptide is Asparagine--tRNA ligase (Staphylococcus aureus (strain JH1)).